The following is a 189-amino-acid chain: Elongation factor P (189 aa).

It belongs to the elongation factor P family.

It is found in the cytoplasm. The protein operates within protein biosynthesis; polypeptide chain elongation. Its function is as follows. Involved in peptide bond synthesis. Stimulates efficient translation and peptide-bond synthesis on native or reconstituted 70S ribosomes in vitro. Probably functions indirectly by altering the affinity of the ribosome for aminoacyl-tRNA, thus increasing their reactivity as acceptors for peptidyl transferase. In Sinorhizobium fredii (strain NBRC 101917 / NGR234), this protein is Elongation factor P.